The following is a 274-amino-acid chain: MAIHLYKTSTPSTRNRAVDSQVKSNPRNRLIYGLHCCSKGRNARGIITAGHRGGGHKRLYRKIDFRRNEKNIYGKIVTIEYDPNRNAYICLIHYGDGEKRYILHPRGAIIGDTIVSGTEVPIKMGNALPLTDMPLGTAIHNIEITFGKGGKLARAAGAVAKLIAKEGKSATLKLPSGEVRLISKNCSATVGQVGNVGVNQKSLGRAGSKCWLGKRPVVRGVVMNPVDHPHGGGEGRAPIGRKKPVTPWGYPALGRRSRKRKKYSDNLILRRRTK.

The interval 225-274 (PVDHPHGGGEGRAPIGRKKPVTPWGYPALGRRSRKRKKYSDNLILRRRTK) is disordered.

The protein belongs to the universal ribosomal protein uL2 family. In terms of assembly, part of the 50S ribosomal subunit.

The protein localises to the plastid. Its subcellular location is the chloroplast. The chain is Large ribosomal subunit protein uL2cz/uL2cy (rpl2-A) from Lotus japonicus (Lotus corniculatus var. japonicus).